The primary structure comprises 395 residues: Synaptotagmin-8 (395 aa).

Topologically, residues 1–44 (MQADRSMKMGHALNPFSTSAPLDATAGPSLIPDLITRIPWPRWT) are extracellular. The chain crosses the membrane as a helical; Signal-anchor for type III membrane protein span at residues 45–65 (LFIAILAAGVLLVSCLLCVIC). Over 66 to 395 (CYCHRHRHRK…PRLPLLRPRS (330 aa)) the chain is Cytoplasmic. 2 consecutive C2 domains span residues 113-229 (QWGR…ESWY) and 241-370 (QMGE…AQWH).

Belongs to the synaptotagmin family. Homodimer or homooligomer. Homodimerization and homooligomerization do not depend on Ca(2+). Interacts with SYNCRIP isoform 2 C-terminus. Binds inositol 1,3,4,5-tetrakisphosphate (IP4). Binds to AP2 in a Ca(2+)-independent manner. Interacts with STX1A, STX1B and STX2; the interaction is Ca(2+)-dependent. Ubiquitous. Detected in testis and brain. Expressed in primary neurons, neuroendocrine and endocrine cells.

Its subcellular location is the cytoplasm. The protein resides in the cell membrane. The protein localises to the cytoplasmic vesicle. It is found in the secretory vesicle. It localises to the acrosome. Its function is as follows. Involved in the trafficking and exocytosis of secretory vesicles in non-neuronal tissues. Mediates Ca(2+)-regulation of exocytosis acrosomal reaction in sperm. May mediate Ca(2+)-regulation of exocytosis in insulin secreted cells. In Mus musculus (Mouse), this protein is Synaptotagmin-8 (Syt8).